Here is a 446-residue protein sequence, read N- to C-terminus: uncharacterized protein (446 aa).

Disordered stretches follow at residues 63 to 95 (KNKP…SDLR) and 155 to 232 (AESS…HPVK). Residues 156 to 169 (ESSVPTPKLTNESN) show a composition bias toward polar residues. Basic and acidic residues-rich tracts occupy residues 182 to 199 (DQHE…DHSA) and 213 to 227 (ITKE…EARK).

This is an uncharacterized protein from Mus musculus (Mouse).